A 147-amino-acid chain; its full sequence is 3-dehydroquinate dehydratase (147 aa).

Tyrosine 24 (proton acceptor) is an active-site residue. Substrate contacts are provided by asparagine 75, histidine 81, and aspartate 88. Histidine 101 functions as the Proton donor in the catalytic mechanism. Substrate is bound by residues 102–103 and arginine 112; that span reads IS.

The protein belongs to the type-II 3-dehydroquinase family. As to quaternary structure, homododecamer.

The enzyme catalyses 3-dehydroquinate = 3-dehydroshikimate + H2O. The protein operates within metabolic intermediate biosynthesis; chorismate biosynthesis; chorismate from D-erythrose 4-phosphate and phosphoenolpyruvate: step 3/7. Catalyzes a trans-dehydration via an enolate intermediate. This is 3-dehydroquinate dehydratase from Cereibacter sphaeroides (strain ATCC 17029 / ATH 2.4.9) (Rhodobacter sphaeroides).